A 210-amino-acid chain; its full sequence is Uracil phosphoribosyltransferase (210 aa).

5-phospho-alpha-D-ribose 1-diphosphate contacts are provided by residues arginine 80, arginine 105, and 132-140 (DPMLATGGS). Residues isoleucine 195 and 200–202 (GDA) each bind uracil. A 5-phospho-alpha-D-ribose 1-diphosphate-binding site is contributed by aspartate 201.

The protein belongs to the UPRTase family. It depends on Mg(2+) as a cofactor.

It carries out the reaction UMP + diphosphate = 5-phospho-alpha-D-ribose 1-diphosphate + uracil. It participates in pyrimidine metabolism; UMP biosynthesis via salvage pathway; UMP from uracil: step 1/1. Its activity is regulated as follows. Allosterically activated by GTP. In terms of biological role, catalyzes the conversion of uracil and 5-phospho-alpha-D-ribose 1-diphosphate (PRPP) to UMP and diphosphate. The polypeptide is Uracil phosphoribosyltransferase (Caldanaerobacter subterraneus subsp. tengcongensis (strain DSM 15242 / JCM 11007 / NBRC 100824 / MB4) (Thermoanaerobacter tengcongensis)).